Reading from the N-terminus, the 258-residue chain is Acetylglutamate kinase (258 aa).

Residues 44 to 45, Arg66, and Asn158 each bind substrate; that span reads GG. ATP contacts are provided by residues 181–186 and 209–211; these read DVSGIL and IIT.

The protein belongs to the acetylglutamate kinase family. ArgB subfamily. As to quaternary structure, homodimer.

Its subcellular location is the cytoplasm. The enzyme catalyses N-acetyl-L-glutamate + ATP = N-acetyl-L-glutamyl 5-phosphate + ADP. The protein operates within amino-acid biosynthesis; L-arginine biosynthesis; N(2)-acetyl-L-ornithine from L-glutamate: step 2/4. Functionally, catalyzes the ATP-dependent phosphorylation of N-acetyl-L-glutamate. The polypeptide is Acetylglutamate kinase (Yersinia pestis bv. Antiqua (strain Antiqua)).